The following is an 804-amino-acid chain: Enhancer of polycomb homolog 2 (804 aa).

4 disordered regions span residues 372 to 398, 484 to 507, 602 to 623, and 642 to 669; these read QSSD…PDGS, GFSS…SDRH, QQSQ…KSDC, and NSPT…VQPS. The segment covering 602–611 has biased composition (low complexity); sequence QQSQQSLQQS. Residues 654-669 show a composition bias toward polar residues; the sequence is DQNAGHSNLNGVVQPS.

It belongs to the enhancer of polycomb family.

It is found in the nucleus. Its function is as follows. May play a role in transcription or DNA repair. This chain is Enhancer of polycomb homolog 2 (epc2), found in Xenopus tropicalis (Western clawed frog).